Consider the following 110-residue polypeptide: MELNVGAMTNVELQLARMVEAKKQRRRSHKQNRRERGHKSPSERARSNLRLFRFLPFYQVDGSELTGSCRHVNVAELPESEASRLELSAEDHDFDDTDWFAGNEWAEGAF.

Positions 16–45 are disordered; the sequence is ARMVEAKKQRRRSHKQNRRERGHKSPSERA. A Nuclear localization signal motif is present at residues 22–27; that stretch reads KKQRRR. A compositionally biased stretch (basic residues) spans 23 to 37; it reads KQRRRSHKQNRRERG.

This sequence belongs to the cucumovirus/ilarvirus protein 2b family. In terms of assembly, homotetramer. Interacts with host AGO1; this interaction blocks AGO1 cleavage activity to attenuate RNA silencing and thus counter host defense. Interacts with host JAZ.

The protein resides in the host nucleus. Multifunctional protein that plays two independent roles: viral suppressor of host RNAi (VSR) and viral inducer of host attractiveness to insect vectors (VIA). Acts as a suppressor of RNA-mediated gene silencing, also known as post-transcriptional gene silencing (PTGS), a mechanism of plant viral defense that limits the accumulation of viral RNAs. May directly interfere with mobile silencing signaling. Also inhibits signal transduction by the phytohormone jasmonate, making the infected plant more attractive to aphids, which are the second host to play a role as a dissemination vector. Acts by binding to and inhibiting JAZ degradation in the host. This chain is Suppressor of silencing 2b, found in Cucurbita pepo (Vegetable marrow).